A 615-amino-acid polypeptide reads, in one-letter code: UvrABC system protein C (615 aa).

The region spanning 12-91 (EKPGVYIMKD…IKKYKPKYNV (80 aa)) is the GIY-YIG domain. The UVR domain maps to 203-238 (DWLIQKLKEDMKKAAEELRFEEAARIRDQIFAIERT).

This sequence belongs to the UvrC family. Interacts with UvrB in an incision complex.

The protein resides in the cytoplasm. Functionally, the UvrABC repair system catalyzes the recognition and processing of DNA lesions. UvrC both incises the 5' and 3' sides of the lesion. The N-terminal half is responsible for the 3' incision and the C-terminal half is responsible for the 5' incision. The polypeptide is UvrABC system protein C (Thermoanaerobacter sp. (strain X514)).